Reading from the N-terminus, the 544-residue chain is U1 small nuclear ribonucleoprotein component PRP42 (544 aa).

HAT repeat units lie at residues 7–39, 51–83, 85–118, 121–156, and 163–195; these read LIHDENFSTLTLNVSRYPKSLAYWEKLLNYIVK, QLLKLIRCTYSSMLNEFPYLENYYIDFALLEYK, GNVSMSHKIFQRGLQAFNQRSLLLWTSYLKFCNN, SHQKQLFKKYETAEEYVGLHFFSGEFWDLYLEQISS, and KYWNVLRKILEIPLHSFSKFYALWLQRIDDIMD. The Nuclear localization signal signature appears at 230–235; the sequence is KKKLKK. HAT repeat units lie at residues 255 to 288, 290 to 322, 366 to 397, and 456 to 488; these read FESKIYINYYTSPETLVSSDEIETWIKYLDYTIT, QTDSLTHLNFQRALLPLAHYDLVWIKYSKWLIN, NLLEKIESSYSDNVENVDDFEIFWDYLQFKTF, and VEKNIFQKIIEFGWEYYLQNGMFWNCYCRLIYF.

In terms of assembly, component of the 18S U1 snRNP particle, a subcomplex of the spliceosome.

It localises to the nucleus. Functionally, essential component of the U1 snRNP particle, which recognizes and binds the 5'-splice site of pre-mRNA. Together with other non-snRNP factors, U1 snRNP forms the spliceosomal commitment complex, that targets pre-mRNA to the splicing pathway. U1 snRNP is cotranscriptionally recruited to intron-containing genes. Required for U1 snRNP biogenesis. The chain is U1 small nuclear ribonucleoprotein component PRP42 (PRP42) from Saccharomyces cerevisiae (strain ATCC 204508 / S288c) (Baker's yeast).